A 274-amino-acid polypeptide reads, in one-letter code: Nitrogenase iron protein (274 aa).

Gly-8 to Ser-15 serves as a coordination point for ATP. Cys-94 contacts [4Fe-4S] cluster. Arg-97 bears the ADP-ribosylarginine; by dinitrogenase reductase ADP-ribosyltransferase mark. Cys-131 provides a ligand contact to [4Fe-4S] cluster.

This sequence belongs to the NifH/BchL/ChlL family. Homodimer. [4Fe-4S] cluster serves as cofactor. Post-translationally, the reversible ADP-ribosylation of Arg-97 inactivates the nitrogenase reductase and regulates nitrogenase activity.

It carries out the reaction N2 + 8 reduced [2Fe-2S]-[ferredoxin] + 16 ATP + 16 H2O = H2 + 8 oxidized [2Fe-2S]-[ferredoxin] + 2 NH4(+) + 16 ADP + 16 phosphate + 6 H(+). The key enzymatic reactions in nitrogen fixation are catalyzed by the nitrogenase complex, which has 2 components: the iron protein and the molybdenum-iron protein. In Solidesulfovibrio magneticus (strain ATCC 700980 / DSM 13731 / RS-1) (Desulfovibrio magneticus), this protein is Nitrogenase iron protein.